Here is a 207-residue protein sequence, read N- to C-terminus: Proteasome subunit beta 1 (207 aa).

The propeptide at 1 to 9 is removed in mature form; by autocatalysis; that stretch reads MWALDKIKG. Thr10 functions as the Nucleophile in the catalytic mechanism.

This sequence belongs to the peptidase T1B family. As to quaternary structure, the 20S proteasome core is composed of 14 alpha and 14 beta subunits that assemble into four stacked heptameric rings, resulting in a barrel-shaped structure. The two inner rings, each composed of seven catalytic beta subunits, are sandwiched by two outer rings, each composed of seven alpha subunits. The catalytic chamber with the active sites is on the inside of the barrel. Has a gated structure, the ends of the cylinder being occluded by the N-termini of the alpha-subunits. Is capped at one or both ends by the proteasome regulatory ATPase, PAN.

The protein resides in the cytoplasm. It catalyses the reaction Cleavage of peptide bonds with very broad specificity.. The formation of the proteasomal ATPase PAN-20S proteasome complex, via the docking of the C-termini of PAN into the intersubunit pockets in the alpha-rings, triggers opening of the gate for substrate entry. Interconversion between the open-gate and close-gate conformations leads to a dynamic regulation of the 20S proteasome proteolysis activity. Functionally, component of the proteasome core, a large protease complex with broad specificity involved in protein degradation. The protein is Proteasome subunit beta 1 of Thermococcus sibiricus (strain DSM 12597 / MM 739).